The primary structure comprises 138 residues: Superoxide dismutase [Mn] (138 aa).

The Mn(2+) site is built by H2, H49, D133, and H137.

It belongs to the iron/manganese superoxide dismutase family. The cofactor is Mn(2+).

It carries out the reaction 2 superoxide + 2 H(+) = H2O2 + O2. Destroys superoxide anion radicals which are normally produced within the cells and which are toxic to biological systems. This chain is Superoxide dismutase [Mn] (sodA), found in Mycobacterium szulgai.